The sequence spans 618 residues: Dihydroxy-acid dehydratase (618 aa).

Mg(2+) is bound at residue aspartate 81. Position 122 (cysteine 122) interacts with [2Fe-2S] cluster. Residues aspartate 123 and lysine 124 each coordinate Mg(2+). Lysine 124 is modified (N6-carboxylysine). Residue cysteine 195 participates in [2Fe-2S] cluster binding. Glutamate 493 is a binding site for Mg(2+). Residue serine 519 is the Proton acceptor of the active site.

It belongs to the IlvD/Edd family. Homodimer. [2Fe-2S] cluster serves as cofactor. Mg(2+) is required as a cofactor.

It carries out the reaction (2R)-2,3-dihydroxy-3-methylbutanoate = 3-methyl-2-oxobutanoate + H2O. It catalyses the reaction (2R,3R)-2,3-dihydroxy-3-methylpentanoate = (S)-3-methyl-2-oxopentanoate + H2O. It participates in amino-acid biosynthesis; L-isoleucine biosynthesis; L-isoleucine from 2-oxobutanoate: step 3/4. Its pathway is amino-acid biosynthesis; L-valine biosynthesis; L-valine from pyruvate: step 3/4. Its function is as follows. Functions in the biosynthesis of branched-chain amino acids. Catalyzes the dehydration of (2R,3R)-2,3-dihydroxy-3-methylpentanoate (2,3-dihydroxy-3-methylvalerate) into 2-oxo-3-methylpentanoate (2-oxo-3-methylvalerate) and of (2R)-2,3-dihydroxy-3-methylbutanoate (2,3-dihydroxyisovalerate) into 2-oxo-3-methylbutanoate (2-oxoisovalerate), the penultimate precursor to L-isoleucine and L-valine, respectively. This is Dihydroxy-acid dehydratase from Shewanella amazonensis (strain ATCC BAA-1098 / SB2B).